Consider the following 359-residue polypeptide: 4-hydroxyproline 2-epimerase (359 aa).

The Proton acceptor role is filled by cysteine 126. Substrate-binding positions include 127-128 (GH), histidine 248, and aspartate 274. Cysteine 278 (proton donor) is an active-site residue. Residue 279–280 (GT) participates in substrate binding.

This sequence belongs to the proline racemase family.

It carries out the reaction trans-4-hydroxy-L-proline = cis-4-hydroxy-D-proline. In terms of biological role, catalyzes the epimerization of trans-4-hydroxy-L-proline (t4LHyp) to cis-4-hydroxy-D-proline (c4DHyp). Is likely involved in a degradation pathway that converts t4LHyp to alpha-ketoglutarate. Displays no proline racemase activity. In Planctopirus limnophila (strain ATCC 43296 / DSM 3776 / IFAM 1008 / Mu 290) (Planctomyces limnophilus), this protein is 4-hydroxyproline 2-epimerase.